The sequence spans 251 residues: tRNA (guanine-N(1)-)-methyltransferase (251 aa).

S-adenosyl-L-methionine is bound by residues Gly117 and 137–142 (IGDYVL).

Belongs to the RNA methyltransferase TrmD family. As to quaternary structure, homodimer.

The protein localises to the cytoplasm. The enzyme catalyses guanosine(37) in tRNA + S-adenosyl-L-methionine = N(1)-methylguanosine(37) in tRNA + S-adenosyl-L-homocysteine + H(+). Its function is as follows. Specifically methylates guanosine-37 in various tRNAs. This Haemophilus ducreyi (strain 35000HP / ATCC 700724) protein is tRNA (guanine-N(1)-)-methyltransferase.